The sequence spans 155 residues: 2-C-methyl-D-erythritol 2,4-cyclodiphosphate synthase (155 aa).

A divalent metal cation-binding residues include aspartate 8 and histidine 10. 4-CDP-2-C-methyl-D-erythritol 2-phosphate contacts are provided by residues 8–10 (DVH) and 34–35 (HS). Histidine 42 is an a divalent metal cation binding site. 4-CDP-2-C-methyl-D-erythritol 2-phosphate-binding positions include 56–58 (DIG), 61–65 (FPDSD), 100–106 (AQKPKML), 132–135 (TTEE), phenylalanine 139, and lysine 142.

The protein belongs to the IspF family. Homotrimer. It depends on a divalent metal cation as a cofactor.

The enzyme catalyses 4-CDP-2-C-methyl-D-erythritol 2-phosphate = 2-C-methyl-D-erythritol 2,4-cyclic diphosphate + CMP. It participates in isoprenoid biosynthesis; isopentenyl diphosphate biosynthesis via DXP pathway; isopentenyl diphosphate from 1-deoxy-D-xylulose 5-phosphate: step 4/6. Its function is as follows. Involved in the biosynthesis of isopentenyl diphosphate (IPP) and dimethylallyl diphosphate (DMAPP), two major building blocks of isoprenoid compounds. Catalyzes the conversion of 4-diphosphocytidyl-2-C-methyl-D-erythritol 2-phosphate (CDP-ME2P) to 2-C-methyl-D-erythritol 2,4-cyclodiphosphate (ME-CPP) with a corresponding release of cytidine 5-monophosphate (CMP). This Clostridium botulinum (strain 657 / Type Ba4) protein is 2-C-methyl-D-erythritol 2,4-cyclodiphosphate synthase.